Reading from the N-terminus, the 518-residue chain is Probable inorganic carbon transporter subunit DabB (518 aa).

13 consecutive transmembrane segments (helical) span residues 3 to 23 (MQWV…LGSL), 37 to 57 (ISLL…FEWV), 65 to 85 (WVGV…IAFV), 114 to 134 (CVVT…WIAI), 165 to 185 (AEAC…TWFI), 207 to 227 (MLLA…GWLI), 242 to 262 (AGII…IVLS), 264 to 284 (MAQW…ALVM), 302 to 322 (MGLM…LHLV), 358 to 378 (WWFA…LADL), 379 to 399 (SGPY…IAER), 403 to 423 (LTSS…VVYT), and 442 to 462 (WKGD…YFLL).

Belongs to the inorganic carbon transporter (TC 9.A.2) DabB family. As to quaternary structure, forms a complex with DabA.

It is found in the cell inner membrane. Intracellular DIC accumulation is sensitive to CCCP (carbonyl cyanide-m-chlorophenylhydrazone) and DCCD (N,N-dicyclohexylcarbodiimide) and therefore likely driven by either proton gradient, ATP, or both. Part of an energy-coupled inorganic carbon pump involved in transport of dissolved inorganic carbon (DIC) with downstream gene dabA (Tcr_0854); has been suggested to be a proton-DIC symporter. The chain is Probable inorganic carbon transporter subunit DabB from Hydrogenovibrio crunogenus (strain DSM 25203 / XCL-2) (Thiomicrospira crunogena).